We begin with the raw amino-acid sequence, 180 residues long: Large ribosomal subunit protein uL5 (180 aa).

It belongs to the universal ribosomal protein uL5 family. In terms of assembly, part of the 50S ribosomal subunit; part of the 5S rRNA/L5/L18/L25 subcomplex. Contacts the 5S rRNA and the P site tRNA. Forms a bridge to the 30S subunit in the 70S ribosome.

In terms of biological role, this is one of the proteins that bind and probably mediate the attachment of the 5S RNA into the large ribosomal subunit, where it forms part of the central protuberance. In the 70S ribosome it contacts protein S13 of the 30S subunit (bridge B1b), connecting the 2 subunits; this bridge is implicated in subunit movement. Contacts the P site tRNA; the 5S rRNA and some of its associated proteins might help stabilize positioning of ribosome-bound tRNAs. The polypeptide is Large ribosomal subunit protein uL5 (Roseiflexus sp. (strain RS-1)).